The chain runs to 219 residues: 2-C-methyl-D-erythritol 4-phosphate cytidylyltransferase (219 aa).

This sequence belongs to the IspD/TarI cytidylyltransferase family. IspD subfamily.

The enzyme catalyses 2-C-methyl-D-erythritol 4-phosphate + CTP + H(+) = 4-CDP-2-C-methyl-D-erythritol + diphosphate. The protein operates within isoprenoid biosynthesis; isopentenyl diphosphate biosynthesis via DXP pathway; isopentenyl diphosphate from 1-deoxy-D-xylulose 5-phosphate: step 2/6. In terms of biological role, catalyzes the formation of 4-diphosphocytidyl-2-C-methyl-D-erythritol from CTP and 2-C-methyl-D-erythritol 4-phosphate (MEP). The sequence is that of 2-C-methyl-D-erythritol 4-phosphate cytidylyltransferase from Chlamydia trachomatis serovar D (strain ATCC VR-885 / DSM 19411 / UW-3/Cx).